The following is a 409-amino-acid chain: MARQKFERTKPHINIGTIGHVDHGKTTLTAAITMALAATGNSKAKRYEDIDSAPEEKARGITINTAHVEYETKNRHYAHVDCPGHADYVKNMITGAAQMDGAILVVSAADGPMPQTKEHILLAKQVGVPNIVVFLNKEDQVDDSELLELVELEIRETLSNYEFPGDDIPVIPGSALLSVEALTKNPKITKGENKWVDKILNLMDQVDSYIPTPTRDTEKDFLMAIEDVLSITGRGTVATGRVERGTIKVGETVELVGLKDTRSTTITGLEMFQKSLDEALAGDNVGVLLRGIQKNDVERGMVLAKPRTINPHTKFDSQVYILTKEEGGRHTPFFEGYRPQFYVRTTDVTGKIESFRSDNDNPAQMVMPGDRIKMKVELIQPIAIEKGMRFAIREGGRTVGAGVVLSIIQ.

Residues Lys-10–Thr-214 enclose the tr-type G domain. A G1 region spans residues Gly-19–Thr-26. Gly-19–Thr-26 serves as a coordination point for GTP. Thr-26 serves as a coordination point for Mg(2+). At Lys-57 the chain carries N6-methyllysine. The interval Gly-60–Asn-64 is G2. Residues Asp-81–Gly-84 are G3. GTP contacts are provided by residues Asp-81 to His-85 and Asn-136 to Asp-139. Positions Asn-136–Asp-139 are G4. Residues Ser-174 to Leu-176 form a G5 region.

The protein belongs to the TRAFAC class translation factor GTPase superfamily. Classic translation factor GTPase family. EF-Tu/EF-1A subfamily.

Its subcellular location is the plastid. It is found in the chloroplast. The catalysed reaction is GTP + H2O = GDP + phosphate + H(+). GTP hydrolase that promotes the GTP-dependent binding of aminoacyl-tRNA to the A-site of ribosomes during protein biosynthesis. The protein is Elongation factor Tu, chloroplastic (tufA) of Euglena gracilis.